A 151-amino-acid chain; its full sequence is Ribosomal RNA large subunit methyltransferase H (151 aa).

Residues Leu-73, Gly-100, and 119 to 124 contribute to the S-adenosyl-L-methionine site; that span reads LSDLTM.

It belongs to the RNA methyltransferase RlmH family. Homodimer.

Its subcellular location is the cytoplasm. It catalyses the reaction pseudouridine(1915) in 23S rRNA + S-adenosyl-L-methionine = N(3)-methylpseudouridine(1915) in 23S rRNA + S-adenosyl-L-homocysteine + H(+). Its function is as follows. Specifically methylates the pseudouridine at position 1915 (m3Psi1915) in 23S rRNA. This is Ribosomal RNA large subunit methyltransferase H from Aliarcobacter butzleri (strain RM4018) (Arcobacter butzleri).